Consider the following 163-residue polypeptide: Phosphopantetheine adenylyltransferase (163 aa).

S9 contacts substrate. Residues 9 to 10 (SF) and H17 contribute to the ATP site. Substrate contacts are provided by K41, T73, and R87. Residues 88–90 (GLR), E98, and 123–129 (YAYFSSS) each bind ATP.

The protein belongs to the bacterial CoaD family. In terms of assembly, homohexamer. Mg(2+) serves as cofactor.

It is found in the cytoplasm. It carries out the reaction (R)-4'-phosphopantetheine + ATP + H(+) = 3'-dephospho-CoA + diphosphate. It participates in cofactor biosynthesis; coenzyme A biosynthesis; CoA from (R)-pantothenate: step 4/5. Its function is as follows. Reversibly transfers an adenylyl group from ATP to 4'-phosphopantetheine, yielding dephospho-CoA (dPCoA) and pyrophosphate. The protein is Phosphopantetheine adenylyltransferase of Lactiplantibacillus plantarum (strain ATCC BAA-793 / NCIMB 8826 / WCFS1) (Lactobacillus plantarum).